The sequence spans 182 residues: Peptidyl-tRNA hydrolase (182 aa).

Residue tyrosine 14 participates in tRNA binding. The Proton acceptor role is filled by histidine 19. Residues tyrosine 65, asparagine 67, and asparagine 113 each contribute to the tRNA site.

It belongs to the PTH family. Monomer.

It localises to the cytoplasm. It catalyses the reaction an N-acyl-L-alpha-aminoacyl-tRNA + H2O = an N-acyl-L-amino acid + a tRNA + H(+). Functionally, hydrolyzes ribosome-free peptidyl-tRNAs (with 1 or more amino acids incorporated), which drop off the ribosome during protein synthesis, or as a result of ribosome stalling. In terms of biological role, catalyzes the release of premature peptidyl moieties from peptidyl-tRNA molecules trapped in stalled 50S ribosomal subunits, and thus maintains levels of free tRNAs and 50S ribosomes. The chain is Peptidyl-tRNA hydrolase from Rickettsia peacockii (strain Rustic).